Consider the following 492-residue polypeptide: Glutamyl-tRNA(Gln) amidotransferase subunit A (492 aa).

Residues Lys78 and Ser158 each act as charge relay system in the active site. Ser182 serves as the catalytic Acyl-ester intermediate.

Belongs to the amidase family. GatA subfamily. In terms of assembly, heterotrimer of A, B and C subunits.

It carries out the reaction L-glutamyl-tRNA(Gln) + L-glutamine + ATP + H2O = L-glutaminyl-tRNA(Gln) + L-glutamate + ADP + phosphate + H(+). Allows the formation of correctly charged Gln-tRNA(Gln) through the transamidation of misacylated Glu-tRNA(Gln) in organisms which lack glutaminyl-tRNA synthetase. The reaction takes place in the presence of glutamine and ATP through an activated gamma-phospho-Glu-tRNA(Gln). The protein is Glutamyl-tRNA(Gln) amidotransferase subunit A of Rhodopseudomonas palustris (strain BisA53).